Reading from the N-terminus, the 144-residue chain is Intraflagellar transport protein 25 homolog (144 aa).

3 residues coordinate Ca(2+): N29, D32, and T37.

The protein belongs to the IFT25 family. As to quaternary structure, component of the IFT complex B, at least composed of IFT20, IFT22, IFT25, IFT27, IFT46, IFT52, TRAF3IP1/IFT54, IFT57, IFT74, IFT80, IFT81, and IFT88. Interacts with IFT27. Interacts with IFT88. As to expression, detected in placenta.

Its subcellular location is the cell projection. The protein localises to the cilium. Functionally, component of the IFT complex B required for sonic hedgehog/SHH signaling. May mediate transport of SHH components: required for the export of SMO and PTCH1 receptors out of the cilium and the accumulation of GLI2 at the ciliary tip in response to activation of the SHH pathway, suggesting it is involved in the dynamic transport of SHH signaling molecules within the cilium. Not required for ciliary assembly. Its role in intraflagellar transport is mainly seen in tissues rich in ciliated cells such as kidney and testis. Essential for male fertility, spermiogenesis and sperm flagella formation. Plays a role in the early development of the kidney. May be involved in the regulation of ureteric bud initiation. The protein is Intraflagellar transport protein 25 homolog of Homo sapiens (Human).